Here is a 515-residue protein sequence, read N- to C-terminus: Protein DETOXIFICATION 32 (515 aa).

Residues 1–26 are compositionally biased toward basic and acidic residues; that stretch reads METLNVDHEDTISSEQEHRAHTKSDT. Residues 1 to 30 are disordered; sequence METLNVDHEDTISSEQEHRAHTKSDTDMPP. 12 consecutive transmembrane segments (helical) span residues 48 to 68, 90 to 110, 131 to 151, 167 to 187, 194 to 214, 225 to 245, 276 to 296, 303 to 323, 347 to 367, 392 to 412, 418 to 438, and 448 to 468; these read LWWL…LGAV, VISG…ATLC, IILN…TPLL, FSLW…TAKF, VIAM…LSWL, GGAV…IVYI, AVMV…AGYL, VAAL…AFGF, LIVA…TLIV, LLAL…VAVG, IVAY…GLVL, and GIWT…LFII. The span at 488–497 shows a compositional bias: basic and acidic residues; it reads GDQSNKREEI. Residues 488-515 are disordered; it reads GDQSNKREEIDLCEEDENNSNGENNHRK. Low complexity predominate over residues 506 to 515; the sequence is NSNGENNHRK.

Belongs to the multi antimicrobial extrusion (MATE) (TC 2.A.66.1) family.

The protein localises to the membrane. The polypeptide is Protein DETOXIFICATION 32 (Arabidopsis thaliana (Mouse-ear cress)).